We begin with the raw amino-acid sequence, 81 residues long: uncharacterized protein (81 aa).

This is an uncharacterized protein from Homo sapiens (Human).